A 388-amino-acid chain; its full sequence is MSKTTSSDDSRDGEGDKRLRSTTKSTWLSFLKSIATFSGDLSSLTAPSFILSSTSLIEYSAYWAEHPELFISLPRGETPLERQLLVTKWFASTLKNQYAARNERYGSEKKPLNPILGELFTGKWNTDIGEDTELTSEQVSHHPPITAYHIYNKKAGVRLEGYNGHKSGFSGPQIHVKQIGHARLILEPHNEVYYITFPLVTLEGLWYGSPYIELGKKSYIISTSGYLTTIEYSGKGYFTGKKNTFKATIVNAKTKSEPIYRIEGSWTGMLKYCTFEDQKRSAWEDFLDCGNYKPVNISVAPIEEQGEYESRRVWKNFAVALDAGDYAAASQEKSKIEEGQRELRRQEEEHNEVWHRKYFEWKDKDEGFEEATKCLRQPVKEGFWYYLR.

The protein belongs to the OSBP family.

Functionally, lipid transporter involved in lipid countertransport between the Golgi complex and membranes of the endoplasmic reticulum: specifically exchanges sterol with phosphatidylinositol 4-phosphate (PI4P), delivering sterol to the Golgi in exchange for PI4P, which is degraded by the SAC1 phosphatase in the endoplasmic reticulum. The polypeptide is Protein kes1 (kes1) (Schizosaccharomyces pombe (strain 972 / ATCC 24843) (Fission yeast)).